Here is a 660-residue protein sequence, read N- to C-terminus: Arginine--tRNA ligase, cytoplasmic (660 aa).

An N-acetylmethionine modification is found at methionine 1. Positions 1 to 72 (MDGLVAQCSA…QAERKRPTKN (72 aa)) are could be involved in the assembly of the multisynthetase complex. Residues 200 to 202 (SPN), histidine 211, tyrosine 384, aspartate 388, and glutamine 412 contribute to the L-arginine site. Positions 201–212 (PNIAKEMHVGHL) match the 'HIGH' region motif. The interaction with tRNA stretch occupies residues 529–543 (NTAAYLLYAFTRIRS).

It belongs to the class-I aminoacyl-tRNA synthetase family. As to quaternary structure, interacts (via N-terminus) with AIMP1 (via N-terminus); this stimulates its catalytic activity. Interacts (via N-terminus) with LARS2 (via C-terminus). Monomer. Part of a multisubunit complex that groups tRNA ligases for Arg (RARS1), Asp (DARS1), Gln (QARS1), Ile (IARS1), Leu (LARS1), Lys (KARS1), Met (MARS1) the bifunctional ligase for Glu and Pro (EPRS1) and the auxiliary subunits AIMP1/p43, AIMP2/p38 and EEF1E1/p18. Interacts with QARS1. Part of a complex composed of RARS1, QARS1 and AIMP1. In terms of tissue distribution, detected in dorsal root ganglion.

It localises to the cytoplasm. The protein localises to the cytosol. It carries out the reaction tRNA(Arg) + L-arginine + ATP = L-arginyl-tRNA(Arg) + AMP + diphosphate. In terms of biological role, forms part of a macromolecular complex that catalyzes the attachment of specific amino acids to cognate tRNAs during protein synthesis. Modulates the secretion of AIMP1 and may be involved in generation of the inflammatory cytokine EMAP2 from AIMP1. The chain is Arginine--tRNA ligase, cytoplasmic (Rars1) from Rattus norvegicus (Rat).